A 380-amino-acid polypeptide reads, in one-letter code: Cytochrome b (380 aa).

Transmembrane regions (helical) follow at residues 34-54 (FGSL…LLAA), 78-99 (WLIR…YLHI), 114-134 (WNIG…GYVL), and 179-199 (FFAL…VHLT). Heme b-binding residues include His-84 and His-98. Positions 183 and 197 each coordinate heme b. His-202 contacts a ubiquinone. Helical transmembrane passes span 227–247 (IKDI…ALFS), 289–309 (LGGV…PLLH), 321–341 (LSQI…WVGS), and 348–368 (FIII…VLFP).

This sequence belongs to the cytochrome b family. In terms of assembly, the cytochrome bc1 complex contains 11 subunits: 3 respiratory subunits (MT-CYB, CYC1 and UQCRFS1), 2 core proteins (UQCRC1 and UQCRC2) and 6 low-molecular weight proteins (UQCRH/QCR6, UQCRB/QCR7, UQCRQ/QCR8, UQCR10/QCR9, UQCR11/QCR10 and a cleavage product of UQCRFS1). This cytochrome bc1 complex then forms a dimer. The cofactor is heme b.

It localises to the mitochondrion inner membrane. Component of the ubiquinol-cytochrome c reductase complex (complex III or cytochrome b-c1 complex) that is part of the mitochondrial respiratory chain. The b-c1 complex mediates electron transfer from ubiquinol to cytochrome c. Contributes to the generation of a proton gradient across the mitochondrial membrane that is then used for ATP synthesis. This chain is Cytochrome b (MT-CYB), found in Paradisaea rubra (Red bird of paradise).